The following is a 220-amino-acid chain: Type IV major pilin protein PilA (220 aa).

Positions 1 to 12 are cleaved as a propeptide — leader sequence; that stretch reads MRVSRFNPRNRG. N-methylphenylalanine is present on Phe13. The chain crosses the membrane as a helical span at residues 13 to 33; it reads FTLIELMIVVAIIGILAAIAI.

Belongs to the N-Me-Phe pilin family.

The protein localises to the fimbrium. Its subcellular location is the membrane. The two-component PilS2/PilR2 is required for proper assembly of T4P and regulation. Major component of the type IV pili that are required for social gliding motility through cycles of extension and retraction. Extended pili are composed of thousands of copies of PilA and retract upon binding to extracellular polysaccharides and thereby pull the cell forward. This chain is Type IV major pilin protein PilA (pilA), found in Myxococcus xanthus (strain DK1622).